A 588-amino-acid polypeptide reads, in one-letter code: Adenine deaminase (588 aa).

The protein belongs to the metallo-dependent hydrolases superfamily. Adenine deaminase family. In terms of assembly, homodimer. Mn(2+) is required as a cofactor.

The enzyme catalyses adenine + H2O + H(+) = hypoxanthine + NH4(+). The polypeptide is Adenine deaminase (Escherichia coli O17:K52:H18 (strain UMN026 / ExPEC)).